We begin with the raw amino-acid sequence, 91 residues long: Putative regulatory protein Helmi_20580 (91 aa).

Belongs to the RemA family.

The sequence is that of Putative regulatory protein Helmi_20580 from Heliobacterium modesticaldum (strain ATCC 51547 / Ice1).